The sequence spans 803 residues: Homeobox protein Wariai (803 aa).

Positions Ser23–Tyr41 are enriched in polar residues. Positions Ser23–Ser144 are disordered. Low complexity predominate over residues Asn42–Asn124. Polar residues predominate over residues Gln125–Tyr138. The segment at residues Ser162 to Glu221 is a DNA-binding region (homeobox). The interval Ile288–Gly330 is disordered. Residues Asn291–Ser302 are compositionally biased toward gly residues. Residues His303–Asn322 show a composition bias toward basic residues. ANK repeat units follow at residues Lys374–Ile403, Gln407–Leu436, Glu440–Val469, Asn474–Val503, Asn507–Ala536, Asp540–Ile569, Glu573–Ile602, Asn606–Ala636, and Gln642–Ile671. A disordered region spans residues Lys695–Asp760. The segment covering Ser696–Asn746 has biased composition (low complexity).

The protein resides in the nucleus. Its function is as follows. Putative transcription factor, that seems to be involved in anterior-posterior patterning of the slug, probably by controlling the proportions of prestalk and prespore cells. This is Homeobox protein Wariai (warA) from Dictyostelium discoideum (Social amoeba).